A 136-amino-acid polypeptide reads, in one-letter code: Large ribosomal subunit protein uL16c (136 aa).

The protein belongs to the universal ribosomal protein uL16 family. As to quaternary structure, part of the 50S ribosomal subunit.

It is found in the plastid. Its subcellular location is the chloroplast. This is Large ribosomal subunit protein uL16c from Chloranthus spicatus (Chulantree).